The chain runs to 249 residues: Phosphate import ATP-binding protein PstB (249 aa).

The 241-residue stretch at 4-244 folds into the ABC transporter domain; the sequence is IQTKDLNLYY…PKDKRTEDYI (241 aa). An ATP-binding site is contributed by 36–43; that stretch reads GPSGCGKS.

Belongs to the ABC transporter superfamily. Phosphate importer (TC 3.A.1.7) family. The complex is composed of two ATP-binding proteins (PstB), two transmembrane proteins (PstC and PstA) and a solute-binding protein (PstS).

It is found in the cell membrane. It carries out the reaction phosphate(out) + ATP + H2O = ADP + 2 phosphate(in) + H(+). Functionally, part of the ABC transporter complex PstSACB involved in phosphate import. Responsible for energy coupling to the transport system. This Clostridium acetobutylicum (strain ATCC 824 / DSM 792 / JCM 1419 / IAM 19013 / LMG 5710 / NBRC 13948 / NRRL B-527 / VKM B-1787 / 2291 / W) protein is Phosphate import ATP-binding protein PstB.